A 574-amino-acid polypeptide reads, in one-letter code: Ribonuclease Y (574 aa).

Residues 1 to 21 (MSLLDLVLLLLVLGLGGVLLL) form a helical membrane-spanning segment. A KH domain is found at 264-327 (AVTVVPIPSD…EIARMALEEL (64 aa)). Residues 390–483 (VLKHSIQVAH…VAAADALSAA (94 aa)) enclose the HD domain.

Belongs to the RNase Y family.

The protein resides in the cell membrane. Functionally, endoribonuclease that initiates mRNA decay. The sequence is that of Ribonuclease Y from Thermus thermophilus (strain ATCC BAA-163 / DSM 7039 / HB27).